Here is a 40-residue protein sequence, read N- to C-terminus: Photosystem II reaction center protein J (40 aa).

Residues 8 to 28 (IPLWVVATIAGLGVITVVGIF) traverse the membrane as a helical segment.

It belongs to the PsbJ family. In terms of assembly, PSII is composed of 1 copy each of membrane proteins PsbA, PsbB, PsbC, PsbD, PsbE, PsbF, PsbH, PsbI, PsbJ, PsbK, PsbL, PsbM, PsbT, PsbX, PsbY, PsbZ, Psb30/Ycf12, peripheral proteins PsbO, CyanoQ (PsbQ), PsbU, PsbV and a large number of cofactors. It forms dimeric complexes.

It localises to the cellular thylakoid membrane. Functionally, one of the components of the core complex of photosystem II (PSII). PSII is a light-driven water:plastoquinone oxidoreductase that uses light energy to abstract electrons from H(2)O, generating O(2) and a proton gradient subsequently used for ATP formation. It consists of a core antenna complex that captures photons, and an electron transfer chain that converts photonic excitation into a charge separation. The polypeptide is Photosystem II reaction center protein J (Trichormus variabilis (strain ATCC 29413 / PCC 7937) (Anabaena variabilis)).